Reading from the N-terminus, the 159-residue chain is Small ribosomal subunit protein uS13 (159 aa).

Positions 136–159 (QRTRSTGRSGATVGVTRKKTQAKK) are disordered. Residues 138–149 (TRSTGRSGATVG) are compositionally biased toward low complexity.

It belongs to the universal ribosomal protein uS13 family. Part of the 30S ribosomal subunit. Forms a loose heterodimer with protein S19. Forms two bridges to the 50S subunit in the 70S ribosome.

Its function is as follows. Located at the top of the head of the 30S subunit, it contacts several helices of the 16S rRNA. In the 70S ribosome it contacts the 23S rRNA (bridge B1a) and protein L5 of the 50S subunit (bridge B1b), connecting the 2 subunits; these bridges are implicated in subunit movement. The protein is Small ribosomal subunit protein uS13 of Methanothrix thermoacetophila (strain DSM 6194 / JCM 14653 / NBRC 101360 / PT) (Methanosaeta thermophila).